A 264-amino-acid chain; its full sequence is Thymidylate synthase (264 aa).

A dUMP-binding site is contributed by Arg-21. His-51 provides a ligand contact to (6R)-5,10-methylene-5,6,7,8-tetrahydrofolate. Position 126 to 127 (126 to 127 (RR)) interacts with dUMP. The Nucleophile role is filled by Cys-146. Residues 166 to 169 (RSCD), Asn-177, and 207 to 209 (HLY) each bind dUMP. Asp-169 contacts (6R)-5,10-methylene-5,6,7,8-tetrahydrofolate. Ala-263 contacts (6R)-5,10-methylene-5,6,7,8-tetrahydrofolate.

It belongs to the thymidylate synthase family. Bacterial-type ThyA subfamily. Homodimer.

The protein resides in the cytoplasm. The catalysed reaction is dUMP + (6R)-5,10-methylene-5,6,7,8-tetrahydrofolate = 7,8-dihydrofolate + dTMP. Its pathway is pyrimidine metabolism; dTTP biosynthesis. In terms of biological role, catalyzes the reductive methylation of 2'-deoxyuridine-5'-monophosphate (dUMP) to 2'-deoxythymidine-5'-monophosphate (dTMP) while utilizing 5,10-methylenetetrahydrofolate (mTHF) as the methyl donor and reductant in the reaction, yielding dihydrofolate (DHF) as a by-product. This enzymatic reaction provides an intracellular de novo source of dTMP, an essential precursor for DNA biosynthesis. In Shewanella oneidensis (strain ATCC 700550 / JCM 31522 / CIP 106686 / LMG 19005 / NCIMB 14063 / MR-1), this protein is Thymidylate synthase.